A 180-amino-acid polypeptide reads, in one-letter code: Large ribosomal subunit protein uL5 (180 aa).

It belongs to the universal ribosomal protein uL5 family. In terms of assembly, part of the 50S ribosomal subunit; part of the 5S rRNA/L5/L18/L25 subcomplex. Contacts the 5S rRNA and the P site tRNA. Forms a bridge to the 30S subunit in the 70S ribosome.

Its function is as follows. This is one of the proteins that bind and probably mediate the attachment of the 5S RNA into the large ribosomal subunit, where it forms part of the central protuberance. In the 70S ribosome it contacts protein S13 of the 30S subunit (bridge B1b), connecting the 2 subunits; this bridge is implicated in subunit movement. Contacts the P site tRNA; the 5S rRNA and some of its associated proteins might help stabilize positioning of ribosome-bound tRNAs. This is Large ribosomal subunit protein uL5 from Polynucleobacter asymbioticus (strain DSM 18221 / CIP 109841 / QLW-P1DMWA-1) (Polynucleobacter necessarius subsp. asymbioticus).